Reading from the N-terminus, the 116-residue chain is Small ribosomal subunit protein uS13m (116 aa).

This sequence belongs to the universal ribosomal protein uS13 family. In terms of assembly, part of the small ribosomal subunit.

The protein localises to the mitochondrion. Functionally, located at the top of the head of the small subunit, it contacts several helices of the 18S rRNA. The chain is Small ribosomal subunit protein uS13m (RPS13) from Daucus carota (Wild carrot).